We begin with the raw amino-acid sequence, 247 residues long: TM2 domain-containing protein 3 (247 aa).

The N-terminal stretch at Met1 to Gly29 is a signal peptide. Topologically, residues Gly30–Asn179 are extracellular. 6 N-linked (GlcNAc...) asparagine glycosylation sites follow: Asn87, Asn122, Asn140, Asn157, Asn169, and Asn179. The chain crosses the membrane as a helical span at residues Trp180–Gly200. Residues Gly183–Val230 enclose the TM2 domain. The Cytoplasmic segment spans residues Ala201–Lys215. A helical membrane pass occupies residues Leu216–Gly236. The Extracellular segment spans residues Tyr237–Ile247.

The protein belongs to the TM2 family. In terms of tissue distribution, widely expressed.

It localises to the membrane. Probable positive regulator of Notch signaling. This chain is TM2 domain-containing protein 3 (TM2D3), found in Homo sapiens (Human).